The chain runs to 283 residues: Phosphatidylglycerol--prolipoprotein diacylglyceryl transferase (283 aa).

3 helical membrane passes run 17–37 (LAVRWYALSYILGFILFTFLG), 56–76 (FLTWGILGVILGGRLGYVLFY), and 88–108 (IFKVWEGGMSFHGGFLGVVIA). Position 139 (Arg-139) interacts with a 1,2-diacyl-sn-glycero-3-phospho-(1'-sn-glycerol). A run of 2 helical transmembrane segments spans residues 222 to 242 (GQVASLFLGGYGIFRFIAEFA) and 255 to 275 (GLSMGQWLSVPMIVLGIVGFV).

It belongs to the Lgt family.

Its subcellular location is the cell inner membrane. It catalyses the reaction L-cysteinyl-[prolipoprotein] + a 1,2-diacyl-sn-glycero-3-phospho-(1'-sn-glycerol) = an S-1,2-diacyl-sn-glyceryl-L-cysteinyl-[prolipoprotein] + sn-glycerol 1-phosphate + H(+). Its pathway is protein modification; lipoprotein biosynthesis (diacylglyceryl transfer). Functionally, catalyzes the transfer of the diacylglyceryl group from phosphatidylglycerol to the sulfhydryl group of the N-terminal cysteine of a prolipoprotein, the first step in the formation of mature lipoproteins. The chain is Phosphatidylglycerol--prolipoprotein diacylglyceryl transferase from Neisseria meningitidis serogroup B (strain ATCC BAA-335 / MC58).